Consider the following 107-residue polypeptide: Theromyzin (107 aa).

An N-terminal signal peptide occupies residues 1-21 (MHAKIILALFLGMTAFLAVQA).

As to expression, coelomic liquid (at protein level). Expressed in large fat cells in contact with coelomic cavities, in intestinal epithelia and at the epidermis level.

The protein localises to the secreted. In terms of biological role, has bacteriostatic activity against M.luteus. No activity toward E.coli and F.oxysporum. This chain is Theromyzin, found in Theromyzon tessulatum (Duck leech).